Consider the following 183-residue polypeptide: UPF0397 protein EAT1b_2102 (183 aa).

The next 5 helical transmembrane spans lie at Ile9–Pro29, Ala42–Ile62, Ser74–Ala94, Ala117–Ala137, and Gly147–Val167.

It belongs to the UPF0397 family.

The protein localises to the cell membrane. This chain is UPF0397 protein EAT1b_2102, found in Exiguobacterium sp. (strain ATCC BAA-1283 / AT1b).